The sequence spans 406 residues: 4-hydroxy-3-methylbut-2-en-1-yl diphosphate synthase (ferredoxin) (406 aa).

The [4Fe-4S] cluster site is built by cysteine 315, cysteine 318, cysteine 349, and glutamate 356.

This sequence belongs to the IspG family. The cofactor is [4Fe-4S] cluster.

It carries out the reaction (2E)-4-hydroxy-3-methylbut-2-enyl diphosphate + 2 oxidized [2Fe-2S]-[ferredoxin] + H2O = 2-C-methyl-D-erythritol 2,4-cyclic diphosphate + 2 reduced [2Fe-2S]-[ferredoxin] + H(+). It functions in the pathway isoprenoid biosynthesis; isopentenyl diphosphate biosynthesis via DXP pathway; isopentenyl diphosphate from 1-deoxy-D-xylulose 5-phosphate: step 5/6. Functionally, converts 2C-methyl-D-erythritol 2,4-cyclodiphosphate (ME-2,4cPP) into 1-hydroxy-2-methyl-2-(E)-butenyl 4-diphosphate. The chain is 4-hydroxy-3-methylbut-2-en-1-yl diphosphate synthase (ferredoxin) from Gloeothece citriformis (strain PCC 7424) (Cyanothece sp. (strain PCC 7424)).